The chain runs to 1076 residues: Histone deacetylase 4 (1076 aa).

Positions 66 to 169 (REQQLQQELL…GKESAVASTE (104 aa)) form a coiled coil. Positions 117–312 (MLAMKHQQEL…NSSSGNVSTE (196 aa)) are interaction with MEF2A. Residues 132–162 (KLERHRQEQELEKQHREQKLQQLKNKEKGKE) are compositionally biased toward basic and acidic residues. Disordered regions lie at residues 132–166 (KLER…SAVA), 205–225 (TQHS…ASYN), and 239–323 (PLRK…PSAP). A compositionally biased stretch (polar residues) spans 205-224 (TQHSSLDQSSPPQSGVSASY). Phosphoserine is present on S209. The residue at position 245 (S245) is a Phosphoserine; by CaMK4 and SIK1. Over residues 258 to 273 (KVAERRSSPLLRRKDG) the composition is skewed to basic and acidic residues. The span at 289–310 (SACSSAPGSGPSSPNSSSGNVS) shows a compositional bias: low complexity. A PxLPxI/L motif; mediates interaction with ANKRA2 and 14-3-3 proteins motif is present at residues 348-353 (PSLPNI). S349 is subject to Phosphoserine. Phosphoserine; by CaMK4 and SIK1 is present on S465. 3 disordered regions span residues 506 to 529 (ISKP…ELRE), 541 to 580 (RLPG…QRPA), and 622 to 645 (RPLS…EPPT). The segment covering 514–529 (RQPESHPEETEEELRE) has biased composition (basic and acidic residues). Residue K556 forms a Glycyl lysine isopeptide (Lys-Gly) (interchain with G-Cter in SUMO) linkage. S562 is modified (phosphoserine). A compositionally biased stretch (polar residues) spans 626–638 (RAQSSPASATFPM). S629 carries the post-translational modification Phosphoserine; by CaMK4. S630 is subject to Phosphoserine. The tract at residues 652–1076 (GLVYDTLMLK…EEPMEEEPPL (425 aa)) is histone deacetylase. Zn(2+) contacts are provided by C664, C666, H672, and C743. The active site involves H795. The Nuclear export signal signature appears at 1043–1076 (EEAETVTAMASLSVGVKPAEKRSEEEPMEEEPPL).

This sequence belongs to the histone deacetylase family. HD type 2 subfamily. Homodimer. Homodimerization via its N-terminal domain. Interacts with HDAC7. Interacts with MEF2A, MEF2C, MEF2D, MORC2 and NR2C1. Interacts with a 14-3-3 chaperone proteins in a phosphorylation dependent manner. Interacts with 14-3-3 protein YWHAB. Interacts with BTBD14B. Interacts with KDM5B. Interacts (via PxLPxI/L motif) with ANKRA2 (via ankyrin repeats). Interacts with CUL7 (as part of the 3M complex); negatively regulated by ANKRA2. Interacts with EP300 in the presence of TFAP2C. Interacts with AHRR. Interacts with MYOCD. Interacts with HSPA1A and HSPA1B leading to their deacetylation at 'Lys-77'. Interacts with ZBTB7B; the interaction allows the recruitment of HDAC4 on CD8 loci for deacetylation and possible inhibition of CD8 genes expression. Interacts with DHX36. Interacts with SIK3; this interaction leads to HDAC4 retention in the cytoplasm. Interacts with ZNF638. In terms of processing, phosphorylated by CaMK4 at Ser-245, Ser-465 and Ser-629. Phosphorylation at other residues by CaMK2D is required for the interaction with 14-3-3. Phosphorylation at Ser-349, within the PxLPxI/L motif, impairs the binding of ANKRA2 but generates a high-affinity docking site for 14-3-3. Post-translationally, sumoylation on Lys-556 is promoted by the E3 SUMO-protein ligase RANBP2, and prevented by phosphorylation by CaMK4.

It is found in the nucleus. The protein localises to the cytoplasm. It carries out the reaction N(6)-acetyl-L-lysyl-[histone] + H2O = L-lysyl-[histone] + acetate. Functionally, responsible for the deacetylation of lysine residues on the N-terminal part of the core histones (H2A, H2B, H3 and H4). Histone deacetylation gives a tag for epigenetic repression and plays an important role in transcriptional regulation, cell cycle progression and developmental events. Histone deacetylases act via the formation of large multiprotein complexes. Involved in muscle maturation via its interaction with the myocyte enhancer factors such as MEF2A, MEF2C and MEF2D. Deacetylates HSPA1A and HSPA1A at 'Lys-77' leading to their preferential binding to co-chaperone STUB1. The sequence is that of Histone deacetylase 4 (Hdac4) from Mus musculus (Mouse).